Here is an 82-residue protein sequence, read N- to C-terminus: Small ribosomal subunit protein bS16 (82 aa).

This sequence belongs to the bacterial ribosomal protein bS16 family.

This is Small ribosomal subunit protein bS16 from Aeromonas hydrophila subsp. hydrophila (strain ATCC 7966 / DSM 30187 / BCRC 13018 / CCUG 14551 / JCM 1027 / KCTC 2358 / NCIMB 9240 / NCTC 8049).